The sequence spans 93 residues: Small ribosomal subunit protein uS19 (93 aa).

This sequence belongs to the universal ribosomal protein uS19 family.

Protein S19 forms a complex with S13 that binds strongly to the 16S ribosomal RNA. The protein is Small ribosomal subunit protein uS19 of Limosilactobacillus fermentum (strain NBRC 3956 / LMG 18251) (Lactobacillus fermentum).